Reading from the N-terminus, the 208-residue chain is MEVNVYNIKGEDTGRKVTLNESIFGIEPNDHAIYLDVKQFMANQRQGTHKSKERSEISGSTRKIGRQKGGGGARRGDMNSPVLVGGARVFGPKPRDYFFKLNKKVKTLARKSALSYKVQNNALIVVEDFVFEAPKTKDFVAMTKNLKVSDKKLLVILPEANKNVYLSARNIEGANVQTVSGLNTYRVLNAGVVVLTENSLKAIDNILI.

The interval 44–79 is disordered; it reads QRQGTHKSKERSEISGSTRKIGRQKGGGGARRGDMN.

The protein belongs to the universal ribosomal protein uL4 family. In terms of assembly, part of the 50S ribosomal subunit.

Its function is as follows. One of the primary rRNA binding proteins, this protein initially binds near the 5'-end of the 23S rRNA. It is important during the early stages of 50S assembly. It makes multiple contacts with different domains of the 23S rRNA in the assembled 50S subunit and ribosome. Functionally, forms part of the polypeptide exit tunnel. This chain is Large ribosomal subunit protein uL4, found in Bacteroides thetaiotaomicron (strain ATCC 29148 / DSM 2079 / JCM 5827 / CCUG 10774 / NCTC 10582 / VPI-5482 / E50).